Reading from the N-terminus, the 312-residue chain is Olfactory receptor 5p57 (312 aa).

Residues Met1–Val25 lie on the Extracellular side of the membrane. Asn5 is a glycosylation site (N-linked (GlcNAc...) asparagine). Residues Ile26 to Ile46 form a helical membrane-spanning segment. The Cytoplasmic segment spans residues Val47–Gln54. A helical transmembrane segment spans residues Leu55 to Ser75. Residues Ser76 to Ala99 are Extracellular-facing. Cysteines 97 and 189 form a disulfide. The helical transmembrane segment at Gln100–Tyr120 threads the bilayer. The Cytoplasmic segment spans residues Asp121–Ser133. Residues Thr134 to Val154 traverse the membrane as a helical segment. Over Asn155 to Glu196 the chain is Extracellular. The N-linked (GlcNAc...) asparagine glycan is linked to Asn165. A helical membrane pass occupies residues Val197 to Ser217. The Cytoplasmic segment spans residues Tyr218–Ala237. Residues Phe238 to Ile258 traverse the membrane as a helical segment. Residues Tyr259 to Asn271 are Extracellular-facing. Residues Lys272–Phe292 traverse the membrane as a helical segment. Residues Arg293–Ser312 are Cytoplasmic-facing.

Belongs to the G-protein coupled receptor 1 family.

It localises to the cell membrane. Functionally, probable odorant receptor, which recognizes only aliphatic alcohols, suggesting that it may convey a 'woody' or 'sweet' sour. This Mus musculus (Mouse) protein is Olfactory receptor 5p57.